Consider the following 312-residue polypeptide: Retron Ec83 reverse transcriptase (312 aa).

Residues 14 to 239 (PDFDVLLKSR…HNRHVTGVTL (226 aa)) enclose the Reverse transcriptase domain. Aspartate 97, aspartate 185, and aspartate 186 together coordinate Mg(2+).

Belongs to the bacterial reverse transcriptase family.

It catalyses the reaction DNA(n) + a 2'-deoxyribonucleoside 5'-triphosphate = DNA(n+1) + diphosphate. Reverse transcriptase (RT) component of antiviral defense system retron Ec83, composed of a non-coding RNA (ncRNA), this reverse transcriptase (RT), a probable ATPase and a putative HNH endonuclease. Expression of retron Ec83 confers protection against bacteriophages T2, T4 and T6. At multiplicity of infection (MOI) of 0.02 cultures slow growth when infected with T4 but do not collapse, at MOI 2 cultures enter growth stasis. Responsible for synthesis of msDNA-Ec83 (a linear ssDNA with a 5'-terminal phosphate residue). Unlike most known msDNAs the mature product from the original strain does not have an RNA component. When the ncRNA plus RT are expressed in strain K12 / JM109 only linear DNA is seen in stationary phase cells, but logarithmic phase cells have both a linear and branched msDNA (a branched molecule with RNA linked by a 2',5'-phosphodiester bond to ssDNA, a 'classic' retron). The branched msDNA is probably the precursor for the mature linear msDNA, the precursor is cleaved endonucleolytically by ExoVII (xseA-xseB) leaving the observed mature 5'-phosphate ssDNA terminus. The retron transcript serves as primer (from a conserved internal G residue) and template for the reaction, and codes for the RT. Overexpression of the ncRNA and RT, which leads to increased levels of msDNA, is mutagenic in vivo. This may be due to a mismatch in the msDNA stem which binds and sequesters MutS and/or MutL. In Escherichia coli, this protein is Retron Ec83 reverse transcriptase.